The primary structure comprises 207 residues: GTP-binding protein RHO1 (207 aa).

Residue 18–25 (GDGACGKT) coordinates GTP. The short motif at 40-48 (YVPTVFDNY) is the Effector region element. Residues 65–69 (DTAGQ) and 123–126 (CKAD) each bind GTP. Residues 187-207 (GKQGKSKAKSDKKKKKKCVVL) form a disordered region. Basic residues predominate over residues 190-207 (GKSKAKSDKKKKKKCVVL). C204 is modified (cysteine methyl ester). A lipid anchor (S-geranylgeranyl cysteine) is attached at C204. Residues 205–207 (VVL) constitute a propeptide, removed in mature form.

The protein belongs to the small GTPase superfamily. Rho family.

The protein localises to the cell membrane. Its function is as follows. Involved in the regulation of actin polarization. Rho proteins are required for distinct steps during polarized hyphal growth of A.gossypii. This chain is GTP-binding protein RHO1 (RHO1), found in Eremothecium gossypii (strain ATCC 10895 / CBS 109.51 / FGSC 9923 / NRRL Y-1056) (Yeast).